The primary structure comprises 163 residues: Superoxide dismutase [Mn] (163 aa).

The Mn(2+) site is built by His2, His50, Asp134, and His138.

It belongs to the iron/manganese superoxide dismutase family. Mn(2+) is required as a cofactor.

It catalyses the reaction 2 superoxide + 2 H(+) = H2O2 + O2. Destroys superoxide anion radicals which are normally produced within the cells and which are toxic to biological systems. This chain is Superoxide dismutase [Mn] (sodA), found in Mycobacterium scrofulaceum.